We begin with the raw amino-acid sequence, 364 residues long: Aminomethyltransferase (364 aa).

This sequence belongs to the GcvT family. As to quaternary structure, the glycine cleavage system is composed of four proteins: P, T, L and H.

It catalyses the reaction N(6)-[(R)-S(8)-aminomethyldihydrolipoyl]-L-lysyl-[protein] + (6S)-5,6,7,8-tetrahydrofolate = N(6)-[(R)-dihydrolipoyl]-L-lysyl-[protein] + (6R)-5,10-methylene-5,6,7,8-tetrahydrofolate + NH4(+). Functionally, the glycine cleavage system catalyzes the degradation of glycine. This is Aminomethyltransferase from Shigella boydii serotype 18 (strain CDC 3083-94 / BS512).